A 436-amino-acid polypeptide reads, in one-letter code: FAD-dependent monooxygenase pigN (436 aa).

Residues E40, G53, and R118 each contribute to the FAD site. Residue R200 is part of the active site. 2 residues coordinate FAD: D316 and A329.

It belongs to the paxM FAD-dependent monooxygenase family. The cofactor is FAD.

It participates in secondary metabolite biosynthesis. In terms of biological role, FAD-dependent monooxygenase; part of the gene cluster that mediates the biosynthesis of azaphilone pigments (MonAzPs), a complex mixture of compounds with a common azaphilone skeleton very widely used as food colorants. Within the pathway, pigN hydroxylates the benzaldehyde M7PKS-1 intermediate at C-4 to form the pyran ring. The first step of the pathway is performed by the nrPKS pigA that forms the hexaketide precursor from successive condensations of five malonyl-CoA units, with a simple acetyl-CoA starter unit. The role of esterase pigG is not clear, but it may play at most a supplementary role in the formation of the benzaldehyde produced by the pigA nrPKS. This very reactive benzaldehyde is intercepted by the pigC ketoreductase that to provide the first stable enzyme-free MonAzPs intermediate, 6-(4-hydroxy-2-oxopentyl)-3-methyl-2,4-dioxocyclohexane carbaldehyde, also known as M7PKS-1. The FAD-dependent monooxygenase pigN hydroxylates M7PKS-1 at C-4, which triggers the formation of the pyran ring. PigJ, pigK and pigD are involved in the acetylation of the pyran ring. PigJ and pigK form the two subunits of a dedicated fungal FAS that produces the side chain fatty acyl moiety of MonAzPs and pigD transfers the fatty acyl chain to the C-4 alcohol. PigM and pigO are involved in the elimination of the omega-1 alcohol. PigM acts as an O-acetyltransferase that synthesizes the putative O-11 acetyl intermediate whereas pigO eliminates acetic acid to yield an intermediate with a C10(11) double bond. The dehydration of the C-11 alcohol followed by the reduction of the C6(7) double bond by the NAD(P)H-dependent oxidoreductase pigE increases the electrophilicity of the C-5 ketone of the resulting acyl benzopyran. This in turn sets up the C-5 ketone for an intramolecular Knoevenagel aldol condensation with the C-20 enol of the side chain. This condensation affords the characteristic linear tricyclic carbon skeletons of the yellow pigments that serve as the common precursors for the classical yellow pigments monascin and ankaflavin, orange pigments rubopunctatin and monascorubrin, and red pigments ribropunctamine and monascorubramine. The FAD-dependent oxidoreductase pigF is especially invoved in the biosynthesis of orange and red pigments via desaturation of C6(7). The protein is FAD-dependent monooxygenase pigN of Monascus ruber (Mold).